A 162-amino-acid polypeptide reads, in one-letter code: NADH-quinone oxidoreductase subunit I (162 aa).

2 consecutive 4Fe-4S ferredoxin-type domains span residues 54-83 (RRYENGEERCIACKLCEAVCPALAITIESE) and 93-122 (TRYDIDLTKCIFCGFCEESCPVDSIVETQI). The [4Fe-4S] cluster site is built by cysteine 63, cysteine 66, cysteine 69, cysteine 73, cysteine 102, cysteine 105, cysteine 108, and cysteine 112.

Belongs to the complex I 23 kDa subunit family. In terms of assembly, NDH-1 is composed of 14 different subunits. Subunits NuoA, H, J, K, L, M, N constitute the membrane sector of the complex. It depends on [4Fe-4S] cluster as a cofactor.

Its subcellular location is the cell inner membrane. It carries out the reaction a quinone + NADH + 5 H(+)(in) = a quinol + NAD(+) + 4 H(+)(out). Functionally, NDH-1 shuttles electrons from NADH, via FMN and iron-sulfur (Fe-S) centers, to quinones in the respiratory chain. The immediate electron acceptor for the enzyme in this species is believed to be ubiquinone. Couples the redox reaction to proton translocation (for every two electrons transferred, four hydrogen ions are translocated across the cytoplasmic membrane), and thus conserves the redox energy in a proton gradient. This is NADH-quinone oxidoreductase subunit I from Burkholderia mallei (strain NCTC 10247).